Here is a 425-residue protein sequence, read N- to C-terminus: uncharacterized protein (425 aa).

In terms of domain architecture, HD spans R55–L181.

This is an uncharacterized protein from Mycoplasma pneumoniae (strain ATCC 29342 / M129 / Subtype 1) (Mycoplasmoides pneumoniae).